A 169-amino-acid polypeptide reads, in one-letter code: MRLLTCDCTFMGQKHSGSVSVEKKNQENDGPPTYEIVFGWSQSFENLMKHRAGQKYFAEFLKGEYSDENILFWQACEELKREKNAEKIEEKARIIYEDFISILSPKEVSLDSRVREIVNTNMGRPSASTFDEAQNQIYTLMQRDSYPRFLASNIYKTVMGTFGIKEEAV.

The RGS domain maps to 39–158 (GWSQSFENLM…FLASNIYKTV (120 aa)).

Post-translationally, may be phosphorylated and activated by egl-4. Expressed in a subset of neurons including ventral cord and head- and tail-ganglia neurons. Also expressed in non-neuronal cells including pharyngeal and uterine muscles.

Its function is as follows. Weakly inhibits G protein signaling in nervous system, interacting preferentially with the G(O) subfamily member goa-1. In vitro, it acts as a GTPase activator of goa-1. Rgs-1 and rgs-2 redundantly adjust signaling when worms are fed to allow rapid induction of egg-laying behavior. Modulates chemotaxis responses by regulating negatively the sensitivity to quinine in ASH sensory neurons. In Caenorhabditis elegans, this protein is Regulator of G-protein signaling rgs-2 (rgs-2).